The sequence spans 639 residues: DNA gyrase subunit B (639 aa).

Residues 392–402 (QAEELTRRKSA) show a composition bias toward basic and acidic residues. The interval 392 to 417 (QAEELTRRKSALESTSLPGKLADCQS) is disordered. Positions 423-537 (SELFIVEGDS…AGYVYAAQPP (115 aa)) constitute a Toprim domain. Residues glutamate 429, aspartate 502, and aspartate 504 each coordinate Mg(2+).

The protein belongs to the type II topoisomerase GyrB family. As to quaternary structure, heterotetramer, composed of two GyrA and two GyrB chains. In the heterotetramer, GyrA contains the active site tyrosine that forms a transient covalent intermediate with DNA, while GyrB binds cofactors and catalyzes ATP hydrolysis. The cofactor is Mg(2+). It depends on Mn(2+) as a cofactor. Ca(2+) is required as a cofactor.

It localises to the cytoplasm. It carries out the reaction ATP-dependent breakage, passage and rejoining of double-stranded DNA.. Its function is as follows. A type II topoisomerase that negatively supercoils closed circular double-stranded (ds) DNA in an ATP-dependent manner to modulate DNA topology and maintain chromosomes in an underwound state. Negative supercoiling favors strand separation, and DNA replication, transcription, recombination and repair, all of which involve strand separation. Also able to catalyze the interconversion of other topological isomers of dsDNA rings, including catenanes and knotted rings. Type II topoisomerases break and join 2 DNA strands simultaneously in an ATP-dependent manner. This is DNA gyrase subunit B from Haloferax lucentense (strain DSM 14919 / JCM 9276 / NCIMB 13854 / Aa 2.2) (Haloferax alicantei).